A 208-amino-acid chain; its full sequence is Ras-related protein M-Ras (208 aa).

Residues aspartate 21, glycine 22, glycine 23, valine 24, glycine 25, lysine 26, serine 27, alanine 28, phenylalanine 38, valine 39, proline 40, tyrosine 42, proline 44, and threonine 45 each contribute to the GTP site. Serine 27 lines the Mg(2+) pocket. The Effector region motif lies at 42–50; it reads YDPTIEDSY. The Mg(2+) site is built by threonine 45 and aspartate 67. GTP contacts are provided by glycine 70, asparagine 126, lysine 127, aspartate 129, serine 156, alanine 157, and lysine 158. Cysteine methyl ester is present on cysteine 205. Residue cysteine 205 is the site of S-geranylgeranyl cysteine attachment. The propeptide at 206-208 is removed in mature form; sequence VIL.

Belongs to the small GTPase superfamily. Ras family. Component of the SHOC2-MRAS-PP1c (SMP) holophosphatase complex consisting of SHOC2, GTP-bound M-Ras/MRAS and the catalytic subunit of protein phosphatase 1 (either PPP1CA, PPP1CB or PPP1CC). Interacts (active GTP-bound form) with both SHOC2 and PP1c (all isoforms) to form a tertiary complex; SHOC2 and PP1c preferably bind M-Ras/MRAS, but they also bind K-Ras/KRAS, N-Ras/NRAS and H-Ras/HRAS. Interacts with RGL3. Interacts (active GTP-bound form preferentially) with RGS14. Mg(2+) serves as cofactor. As to expression, expressed in skeletal muscle cells.

It localises to the cell membrane. The enzyme catalyses GTP + H2O = GDP + phosphate + H(+). Signal transducer in the Ras-MAPK signaling pathway that regulates cell proliferation and survival. Core component of the SHOC2-MRAS-PP1c (SMP) holophosphatase complex that regulates the MAPK pathway activation. The formation of the SMP complex only occurs when MRAS is GTP-bound. MRAS has low intrinsic GTPase activity and may require additional factors for activation. The SMP complex specifically dephosphorylates the inhibitory phosphorylation at 'Ser-259' of RAF1 kinase, 'Ser-365' of BRAF kinase and 'Ser-214' of ARAF kinase, stimulating their kinase activities. The protein is Ras-related protein M-Ras (Mras) of Rattus norvegicus (Rat).